The sequence spans 146 residues: uncharacterized protein (146 aa).

One can recognise a Glutaredoxin domain in the interval 34 to 135 (EDKIVNDVMT…PLLEKAHALF (102 aa)). Cysteine 54 contributes to the [2Fe-2S] cluster binding site.

This sequence belongs to the glutaredoxin family. Monothiol subfamily.

This is an uncharacterized protein from Caenorhabditis elegans.